The chain runs to 127 residues: Basic leucine zipper transcriptional factor ATF-like 3 (127 aa).

The interval 1–72 is disordered; it reads MSQGLPAAGS…LHEEYESLEQ (72 aa). 2 positions are modified to phosphoserine: Ser2 and Ser31. The 64-residue stretch at 35–98 folds into the bZIP domain; that stretch reads DDRKVRRREK…KHLTEALKEH (64 aa). The basic motif stretch occupies residues 37-62; it reads RKVRRREKNRVAAQRSRKKQTQKADK. Residues 58 to 67 show a composition bias toward basic and acidic residues; that stretch reads QKADKLHEEY. Positions 63–91 are leucine-zipper; that stretch reads LHEEYESLEQENTMLRREIGKLTEELKHL.

The protein belongs to the bZIP family. In terms of assembly, heterodimer; heterodimerizes with JUN family proteins. Interacts with JUN.

It is found in the nucleus. AP-1 family transcription factor that controls the differentiation of CD8(+) thymic conventional dendritic cells in the immune system. Required for development of CD8-alpha(+) classical dendritic cells (cDCs) and related CD103(+) dendritic cells that cross-present antigens to CD8 T-cells and produce interleukin-12 (IL12) in response to pathogens. Acts via the formation of a heterodimer with JUN family proteins that recognizes and binds DNA sequence 5'-TGA[CG]TCA-3' and regulates expression of target genes. This is Basic leucine zipper transcriptional factor ATF-like 3 (BATF3) from Homo sapiens (Human).